Reading from the N-terminus, the 358-residue chain is Mitogen-activated protein kinase hog-1 (358 aa).

Positions 20 to 299 (YSDLQPVGMG…ATEALSHEYL (280 aa)) constitute a Protein kinase domain. Residues 26–34 (VGMGAFGLV) and Lys49 contribute to the ATP site. The active-site Proton acceptor is Asp141. Thr171 bears the Phosphothreonine mark. The short motif at 171-173 (TGY) is the TXY element. Position 173 is a phosphotyrosine (Tyr173).

It belongs to the protein kinase superfamily. Ser/Thr protein kinase family. MAP kinase subfamily. HOG1 sub-subfamily. Mg(2+) serves as cofactor. Post-translationally, dually phosphorylated on Thr-171 and Tyr-173, which activates the enzyme. Phosphorylation is induced by fungicides and osmotic stress.

Its subcellular location is the cytoplasm. The protein localises to the nucleus. It carries out the reaction L-seryl-[protein] + ATP = O-phospho-L-seryl-[protein] + ADP + H(+). It catalyses the reaction L-threonyl-[protein] + ATP = O-phospho-L-threonyl-[protein] + ADP + H(+). With respect to regulation, activated by tyrosine and threonine phosphorylation. Functionally, proline-directed serine/threonine-protein kinase involved in a signal transduction pathway that is activated by changes in the osmolarity of the extracellular environment. Controls osmotic regulation of transcription of target genes. Involved in ion flux-mediated turgor regulation. In Neurospora crassa (strain ATCC 24698 / 74-OR23-1A / CBS 708.71 / DSM 1257 / FGSC 987), this protein is Mitogen-activated protein kinase hog-1 (hog-1).